Here is a 310-residue protein sequence, read N- to C-terminus: p-hydroxybenzoic acid efflux pump subunit AaeA (310 aa).

Residues 12–32 form a helical membrane-spanning segment; it reads AITVVLVILAFIAIFNAWVYY.

This sequence belongs to the membrane fusion protein (MFP) (TC 8.A.1) family.

Its subcellular location is the cell inner membrane. Its function is as follows. Forms an efflux pump with AaeB. The protein is p-hydroxybenzoic acid efflux pump subunit AaeA of Escherichia coli O7:K1 (strain IAI39 / ExPEC).